Reading from the N-terminus, the 328-residue chain is Phosphate acyltransferase (328 aa).

Belongs to the PlsX family. As to quaternary structure, homodimer. Probably interacts with PlsY.

The protein localises to the cytoplasm. The catalysed reaction is a fatty acyl-[ACP] + phosphate = an acyl phosphate + holo-[ACP]. Its pathway is lipid metabolism; phospholipid metabolism. Its function is as follows. Catalyzes the reversible formation of acyl-phosphate (acyl-PO(4)) from acyl-[acyl-carrier-protein] (acyl-ACP). This enzyme utilizes acyl-ACP as fatty acyl donor, but not acyl-CoA. This Campylobacter jejuni subsp. jejuni serotype O:2 (strain ATCC 700819 / NCTC 11168) protein is Phosphate acyltransferase.